The sequence spans 491 residues: Anthranilate synthase component 1 (491 aa).

L-tryptophan-binding positions include Ser49 and 271–273; that span reads PYL. 306-307 serves as a coordination point for chorismate; that stretch reads GT. Residue Glu333 coordinates Mg(2+). Residues Tyr421, Arg441, 455–457, and Gly457 each bind chorismate; that span reads GAG. Glu470 lines the Mg(2+) pocket.

The protein belongs to the anthranilate synthase component I family. As to quaternary structure, heterotetramer consisting of two non-identical subunits: a beta subunit (TrpG) and a large alpha subunit (TrpE). Mg(2+) serves as cofactor.

The catalysed reaction is chorismate + L-glutamine = anthranilate + pyruvate + L-glutamate + H(+). Its pathway is amino-acid biosynthesis; L-tryptophan biosynthesis; L-tryptophan from chorismate: step 1/5. With respect to regulation, feedback inhibited by tryptophan. Its function is as follows. Part of a heterotetrameric complex that catalyzes the two-step biosynthesis of anthranilate, an intermediate in the biosynthesis of L-tryptophan. In the first step, the glutamine-binding beta subunit (TrpG) of anthranilate synthase (AS) provides the glutamine amidotransferase activity which generates ammonia as a substrate that, along with chorismate, is used in the second step, catalyzed by the large alpha subunit of AS (TrpE) to produce anthranilate. In the absence of TrpG, TrpE can synthesize anthranilate directly from chorismate and high concentrations of ammonia. This is Anthranilate synthase component 1 (trpE) from Neisseria meningitidis serogroup B (strain ATCC BAA-335 / MC58).